Consider the following 418-residue polypeptide: 3-isopropylmalate dehydratase large subunit 1 (418 aa).

Residues C298, C358, and C361 each coordinate [4Fe-4S] cluster.

Belongs to the aconitase/IPM isomerase family. LeuC type 2 subfamily. Heterodimer of LeuC and LeuD. [4Fe-4S] cluster serves as cofactor.

The enzyme catalyses (2R,3S)-3-isopropylmalate = (2S)-2-isopropylmalate. It participates in amino-acid biosynthesis; L-leucine biosynthesis; L-leucine from 3-methyl-2-oxobutanoate: step 2/4. Its function is as follows. Catalyzes the isomerization between 2-isopropylmalate and 3-isopropylmalate, via the formation of 2-isopropylmaleate. This is 3-isopropylmalate dehydratase large subunit 1 from Archaeoglobus fulgidus (strain ATCC 49558 / DSM 4304 / JCM 9628 / NBRC 100126 / VC-16).